A 73-amino-acid chain; its full sequence is MSFRRKKFCAFDAKNLQEIDYKDVNTLKDYIMESGRVVPSRITGTCAKHQRQISRAIKLARYLALLPYCDTHQ.

This sequence belongs to the bacterial ribosomal protein bS18 family. Part of the 30S ribosomal subunit. Forms a tight heterodimer with protein bS6.

Functionally, binds as a heterodimer with protein bS6 to the central domain of the 16S rRNA, where it helps stabilize the platform of the 30S subunit. The chain is Small ribosomal subunit protein bS18 from Coxiella burnetii (strain Dugway 5J108-111).